Here is a 359-residue protein sequence, read N- to C-terminus: Dual-specificity RNA methyltransferase RlmN (359 aa).

Residue glutamate 86 is the Proton acceptor of the active site. The Radical SAM core domain occupies 105 to 338; that stretch reads EGEKYTICVS…CTIRESKGID (234 aa). Cysteines 112 and 343 form a disulfide. [4Fe-4S] cluster is bound by residues cysteine 119, cysteine 123, and cysteine 126. S-adenosyl-L-methionine-binding positions include 169–170, serine 201, 224–226, and asparagine 300; these read GE and SLH. The active-site S-methylcysteine intermediate is the cysteine 343.

The protein belongs to the radical SAM superfamily. RlmN family. It depends on [4Fe-4S] cluster as a cofactor.

It is found in the cytoplasm. The enzyme catalyses adenosine(2503) in 23S rRNA + 2 reduced [2Fe-2S]-[ferredoxin] + 2 S-adenosyl-L-methionine = 2-methyladenosine(2503) in 23S rRNA + 5'-deoxyadenosine + L-methionine + 2 oxidized [2Fe-2S]-[ferredoxin] + S-adenosyl-L-homocysteine. It carries out the reaction adenosine(37) in tRNA + 2 reduced [2Fe-2S]-[ferredoxin] + 2 S-adenosyl-L-methionine = 2-methyladenosine(37) in tRNA + 5'-deoxyadenosine + L-methionine + 2 oxidized [2Fe-2S]-[ferredoxin] + S-adenosyl-L-homocysteine. Specifically methylates position 2 of adenine 2503 in 23S rRNA and position 2 of adenine 37 in tRNAs. m2A2503 modification seems to play a crucial role in the proofreading step occurring at the peptidyl transferase center and thus would serve to optimize ribosomal fidelity. The protein is Dual-specificity RNA methyltransferase RlmN of Wolinella succinogenes (strain ATCC 29543 / DSM 1740 / CCUG 13145 / JCM 31913 / LMG 7466 / NCTC 11488 / FDC 602W) (Vibrio succinogenes).